Here is a 485-residue protein sequence, read N- to C-terminus: E3 ubiquitin-protein ligase rnf8 (485 aa).

The FHA domain occupies 43-97 (VSVGRGLNVTHQILSSSCPLMISRIHCVFKLNEGRQWTVTDNKSLNGVWVNGKRI). A disordered region spans residues 150–232 (AASLSQKLKN…SSTCSDSSQH (83 aa)). Residues 199-219 (GERRETLKLSSRPLEEDRDKA) are compositionally biased toward basic and acidic residues. Over residues 221–230 (SSSSTCSDSS) the composition is skewed to low complexity. Residues 392 to 430 (CSICSELFIEAVTLNCAHSFCQHCISEWRNRKDKCPMCW) form an RING-type zinc finger.

The protein belongs to the RNF8 family. As to quaternary structure, homodimer. Forms a E2-E3 ubiquitin ligase complex composed of the rnf8 homodimer and a E2 heterodimer of ube2n and ube2v2.

It localises to the nucleus. The enzyme catalyses S-ubiquitinyl-[E2 ubiquitin-conjugating enzyme]-L-cysteine + [acceptor protein]-L-lysine = [E2 ubiquitin-conjugating enzyme]-L-cysteine + N(6)-ubiquitinyl-[acceptor protein]-L-lysine.. The protein operates within protein modification; protein ubiquitination. In terms of biological role, E3 ubiquitin-protein ligase that plays a key role in DNA damage signaling via 2 distinct roles: by mediating the 'Lys-63'-linked ubiquitination of histones H2A and H2AX and promoting the recruitment of DNA repair proteins at double-strand breaks (DSBs) sites, and by catalyzing 'Lys-48'-linked ubiquitination to remove target proteins from DNA damage sites. Following DNA DSBs, it is recruited to the sites of damage by ATM-phosphorylated mdc1 and catalyzes the 'Lys-63'-linked ubiquitination of histones H2A and H2AX. H2A ubiquitination also mediates the ATM-dependent transcriptional silencing at regions flanking DSBs in cis, a mechanism to avoid collision between transcription and repair intermediates. Also catalyzes the formation of 'Lys-48'-linked polyubiquitin chains, leading to degradation of substrate proteins. In addition to its function in damage signaling, also plays a role in higher-order chromatin structure by mediating extensive chromatin decondensation. This is E3 ubiquitin-protein ligase rnf8 from Danio rerio (Zebrafish).